The sequence spans 337 residues: Phosphate acyltransferase (337 aa).

It belongs to the PlsX family. In terms of assembly, homodimer. Probably interacts with PlsY.

It localises to the cytoplasm. The catalysed reaction is a fatty acyl-[ACP] + phosphate = an acyl phosphate + holo-[ACP]. Its pathway is lipid metabolism; phospholipid metabolism. Its function is as follows. Catalyzes the reversible formation of acyl-phosphate (acyl-PO(4)) from acyl-[acyl-carrier-protein] (acyl-ACP). This enzyme utilizes acyl-ACP as fatty acyl donor, but not acyl-CoA. In Aquifex aeolicus (strain VF5), this protein is Phosphate acyltransferase.